The primary structure comprises 159 residues: Putative pre-16S rRNA nuclease (159 aa).

The protein belongs to the YqgF nuclease family.

It is found in the cytoplasm. Could be a nuclease involved in processing of the 5'-end of pre-16S rRNA. In Bartonella henselae (strain ATCC 49882 / DSM 28221 / CCUG 30454 / Houston 1) (Rochalimaea henselae), this protein is Putative pre-16S rRNA nuclease.